The primary structure comprises 305 residues: Ribosomal RNA large subunit methyltransferase F (305 aa).

This sequence belongs to the methyltransferase superfamily. METTL16/RlmF family.

The protein resides in the cytoplasm. It catalyses the reaction adenosine(1618) in 23S rRNA + S-adenosyl-L-methionine = N(6)-methyladenosine(1618) in 23S rRNA + S-adenosyl-L-homocysteine + H(+). Functionally, specifically methylates the adenine in position 1618 of 23S rRNA. This Bacteroides fragilis (strain YCH46) protein is Ribosomal RNA large subunit methyltransferase F.